The primary structure comprises 125 residues: MLLLKNCLTIFFKNKNYVSWRFLEVNDRETWAEDYALDLDKYALEAYWLEAKEVKQDDASVLSCFVFKYQGWFFFFIYYYLFKTQAELDAEAKIDEELSDDEGNIDEDLEDFQNEAKVSTSLELF.

The protein localises to the mitochondrion. This is an uncharacterized protein from Paramecium tetraurelia.